A 129-amino-acid chain; its full sequence is Small ribosomal subunit protein uS11 (129 aa).

Belongs to the universal ribosomal protein uS11 family. Part of the 30S ribosomal subunit. Interacts with proteins S7 and S18. Binds to IF-3.

Its function is as follows. Located on the platform of the 30S subunit, it bridges several disparate RNA helices of the 16S rRNA. Forms part of the Shine-Dalgarno cleft in the 70S ribosome. The chain is Small ribosomal subunit protein uS11 from Caulobacter sp. (strain K31).